Reading from the N-terminus, the 782-residue chain is E3 ubiquitin-protein ligase SopA (782 aa).

The interval 137–171 (VSVSANNRPTVSEGRTPPVSPSLSLQATSSPSSPA) is disordered. Positions 157-171 (PSLSLQATSSPSSPA) are enriched in low complexity. The active-site Glycyl thioester intermediate is C753.

The protein belongs to the SopA E3 ligase family. Post-translationally, ubiquitinated in the presence of host E1 ubiquitin-activating enzyme, E2 ubiquitin-conjugating enzyme and ubiquitin.

It is found in the secreted. Its subcellular location is the host cell. The enzyme catalyses S-ubiquitinyl-[E2 ubiquitin-conjugating enzyme]-L-cysteine + [acceptor protein]-L-lysine = [E2 ubiquitin-conjugating enzyme]-L-cysteine + N(6)-ubiquitinyl-[acceptor protein]-L-lysine.. In terms of biological role, effector proteins function to alter host cell physiology and promote bacterial survival in host tissues. This protein is an E3 ubiquitin ligase that interferes with host's ubiquitination pathway. The protein is E3 ubiquitin-protein ligase SopA (sopA) of Salmonella newport (strain SL254).